A 216-amino-acid polypeptide reads, in one-letter code: Small ribosomal subunit protein uS2 (216 aa).

Belongs to the universal ribosomal protein uS2 family.

The sequence is that of Small ribosomal subunit protein uS2 from Carsonella ruddii (strain PV).